Consider the following 268-residue polypeptide: Shikimate dehydrogenase (NADP(+)) (268 aa).

Shikimate is bound by residues 13–15 and T60; that span reads SLS. The active-site Proton acceptor is the K64. Residue E76 coordinates NADP(+). 2 residues coordinate shikimate: N85 and D100. Residues 124-128, 148-153, and I209 each bind NADP(+); these read GAGGA and NRTMAR. Residue Y211 participates in shikimate binding. G232 lines the NADP(+) pocket.

It belongs to the shikimate dehydrogenase family. Homodimer.

The enzyme catalyses shikimate + NADP(+) = 3-dehydroshikimate + NADPH + H(+). It participates in metabolic intermediate biosynthesis; chorismate biosynthesis; chorismate from D-erythrose 4-phosphate and phosphoenolpyruvate: step 4/7. Involved in the biosynthesis of the chorismate, which leads to the biosynthesis of aromatic amino acids. Catalyzes the reversible NADPH linked reduction of 3-dehydroshikimate (DHSA) to yield shikimate (SA). The sequence is that of Shikimate dehydrogenase (NADP(+)) from Staphylococcus aureus (strain MSSA476).